Consider the following 590-residue polypeptide: Beta-fructofuranosidase, insoluble isoenzyme CWINV2 (590 aa).

Residues 1 to 25 form the signal peptide; it reads MSAPKFGYVLLLIVLINISNNGVDA. Residues 59–62, glutamine 78, and tryptophan 86 each bind substrate; that span reads WIND. Aspartate 62 is a catalytic residue. Asparagine 118 carries N-linked (GlcNAc...) asparagine glycosylation. 121–122 provides a ligand contact to substrate; it reads WS. N-linked (GlcNAc...) asparagine glycans are attached at residues asparagine 143 and asparagine 180. Residues 185-186, glutamate 241, and aspartate 275 contribute to the substrate site; that span reads RD. Asparagine 335 is a glycosylation site (N-linked (GlcNAc...) asparagine). A disulfide bond links cysteine 435 and cysteine 483. N-linked (GlcNAc...) asparagine glycosylation occurs at asparagine 564.

This sequence belongs to the glycosyl hydrolase 32 family. As to expression, expressed in flowers, and seeds.

Its subcellular location is the secreted. The protein localises to the extracellular space. It localises to the apoplast. The protein resides in the cell wall. The enzyme catalyses Hydrolysis of terminal non-reducing beta-D-fructofuranoside residues in beta-D-fructofuranosides.. The polypeptide is Beta-fructofuranosidase, insoluble isoenzyme CWINV2 (CWINV2) (Arabidopsis thaliana (Mouse-ear cress)).